We begin with the raw amino-acid sequence, 122 residues long: Protein preY, mitochondrial (122 aa).

Residues 1–40 constitute a mitochondrion transit peptide; the sequence is MLAVRAWGRTYNTLVQRKLNAACPTGALPAVTLRPLHCSL. The 47-residue stretch at 56–102 folds into the TRM112 domain; sequence DPTLLQFLVCPLSRKSLRYEESTNELINDELGIAYPIVDGIPNMIPQ.

The protein belongs to the PREY family.

The protein localises to the mitochondrion. In mitochondria, S-adenosylmethionine-dependent methyltransferase chaperone that supports both coenzyme Q biosynthesis and NADH:ubiquinone oxidoreductase complex (complex I, MT-ND1) assembly. The sequence is that of Protein preY, mitochondrial (pyurf) from Xenopus tropicalis (Western clawed frog).